The primary structure comprises 150 residues: Ribonuclease K6 (150 aa).

Positions 1–23 (MVLCFPLLLLLLVLWGPVCPLHA) are cleaved as a signal peptide. Catalysis depends on His-38, which acts as the Proton acceptor. Disulfide bonds link Cys-46-Cys-104, Cys-60-Cys-114, Cys-78-Cys-129, and Cys-85-Cys-92. Asn-55 carries an N-linked (GlcNAc...) asparagine glycan. Residues 61–65 (KHQNT) and Lys-86 each bind substrate. Asn-100 is a glycosylation site (N-linked (GlcNAc...) asparagine). Arg-105 is a substrate binding site. His-145 serves as the catalytic Proton donor.

It belongs to the pancreatic ribonuclease family. As to quaternary structure, interacts (via N-terminus) with bacterial lipopolysaccharide (LPS).

Its subcellular location is the secreted. It is found in the lysosome. The protein localises to the cytoplasmic granule. Functionally, ribonuclease which shows a preference for the pyrimidines uridine and cytosine. Has potent antibacterial activity against a range of Gram-positive and Gram-negative bacteria, including P.aeruginosa, A.baumanii, M.luteus, S.aureus, E.faecalis, E.faecium, S.saprophyticus and E.coli. Causes loss of bacterial membrane integrity, and also promotes agglutination of Gram-negative bacteria. Probably contributes to urinary tract sterility. Bactericidal activity is independent of RNase activity. The chain is Ribonuclease K6 (RNASE6) from Pongo pygmaeus (Bornean orangutan).